Consider the following 314-residue polypeptide: uncharacterized protein (314 aa).

Disordered regions lie at residues 170-203 and 258-314; these read RSSMNSQSQMSESSFPTPIDPPPRIPHPPLNPDE and VGES…PKKR. Positions 171–186 are enriched in low complexity; that stretch reads SSMNSQSQMSESSFPT. Positions 187–200 are enriched in pro residues; sequence PIDPPPRIPHPPLN. Over residues 261-272 the composition is skewed to polar residues; it reads SSRQGENTQNVH. Over residues 289-303 the composition is skewed to basic and acidic residues; it reads RFKDDARKSNEDEHM.

This is an uncharacterized protein from Arabidopsis thaliana (Mouse-ear cress).